A 432-amino-acid polypeptide reads, in one-letter code: Neuronal pentraxin-1 (432 aa).

The N-terminal stretch at Met1 to Ala22 is a signal peptide. The interval Arg88–Ser122 is disordered. Asn154 and Asn193 each carry an N-linked (GlcNAc...) asparagine glycan. In terms of domain architecture, Pentraxin (PTX) spans Asp226–Cys428. Cys256 and Cys316 are joined by a disulfide. Asn280, Glu358, Gln359, Asp360, and Gln370 together coordinate Ca(2+).

As to quaternary structure, homooligomer or heterooligomer (probably pentamer) with neuronal pentraxin receptor (NPTXR). Requires Ca(2+) as cofactor. Expressed in brain and kidney.

The protein resides in the secreted. It is found in the cytoplasmic vesicle. Its subcellular location is the secretory vesicle. The protein localises to the endoplasmic reticulum. In terms of biological role, may be involved in mediating uptake of synaptic material during synapse remodeling or in mediating the synaptic clustering of AMPA glutamate receptors at a subset of excitatory synapses. This Mus musculus (Mouse) protein is Neuronal pentraxin-1 (Nptx1).